The primary structure comprises 295 residues: HTH-type transcriptional regulator ShiR (295 aa).

Positions 1–58 (MEIRWLEGFIAVAEELHFSNAAIRLGMPQSPLSQLIRRLESELGQKLFDRSTRSVELT) constitute an HTH lysR-type domain. The H-T-H motif DNA-binding region spans 18–37 (FSNAAIRLGMPQSPLSQLIR).

Belongs to the LysR transcriptional regulatory family.

Its function is as follows. Activates expression of the shikimate transporter ShiA in the presence of shikimate. Binds to the shiA promoter region. The polypeptide is HTH-type transcriptional regulator ShiR (Corynebacterium glutamicum (strain R)).